A 429-amino-acid polypeptide reads, in one-letter code: Glutamate-1-semialdehyde 2,1-aminomutase 1 (429 aa).

K267 carries the N6-(pyridoxal phosphate)lysine modification.

It belongs to the class-III pyridoxal-phosphate-dependent aminotransferase family. HemL subfamily. In terms of assembly, homodimer. Pyridoxal 5'-phosphate serves as cofactor.

It is found in the cytoplasm. The catalysed reaction is (S)-4-amino-5-oxopentanoate = 5-aminolevulinate. The protein operates within porphyrin-containing compound metabolism; protoporphyrin-IX biosynthesis; 5-aminolevulinate from L-glutamyl-tRNA(Glu): step 2/2. The sequence is that of Glutamate-1-semialdehyde 2,1-aminomutase 1 from Staphylococcus carnosus (strain TM300).